The primary structure comprises 390 residues: Stearoyl-[acyl-carrier-protein] 9-desaturase 5, chloroplastic (390 aa).

Residues 1–22 (MAFAASHTASPSSCGGVAQRRS) are disordered. A chloroplast-targeting transit peptide spans 1-31 (MAFAASHTASPSSCGGVAQRRSNGMSPVVAM). 6 residues coordinate Fe cation: Glu132, Glu170, His173, Glu223, Glu256, and His259.

It belongs to the fatty acid desaturase type 2 family. As to quaternary structure, homodimer. Fe(2+) is required as a cofactor.

The protein localises to the plastid. The protein resides in the chloroplast. The enzyme catalyses octadecanoyl-[ACP] + 2 reduced [2Fe-2S]-[ferredoxin] + O2 + 2 H(+) = (9Z)-octadecenoyl-[ACP] + 2 oxidized [2Fe-2S]-[ferredoxin] + 2 H2O. Its pathway is lipid metabolism; fatty acid metabolism. Its function is as follows. Converts stearoyl-ACP to oleoyl-ACP by introduction of a cis double bond between carbons 9 and 10 of the acyl chain. In Oryza sativa subsp. japonica (Rice), this protein is Stearoyl-[acyl-carrier-protein] 9-desaturase 5, chloroplastic.